Here is a 100-residue protein sequence, read N- to C-terminus: Urease subunit gamma 2 (100 aa).

Belongs to the urease gamma subunit family. As to quaternary structure, heterotrimer of UreA (gamma), UreB (beta) and UreC (alpha) subunits. Three heterotrimers associate to form the active enzyme.

It is found in the cytoplasm. The enzyme catalyses urea + 2 H2O + H(+) = hydrogencarbonate + 2 NH4(+). Its pathway is nitrogen metabolism; urea degradation; CO(2) and NH(3) from urea (urease route): step 1/1. Its function is as follows. Disrupting the ure2 operon has no effect on urease activity or pathogen survival in BALB/c mice when administered orally. The protein is Urease subunit gamma 2 of Brucella abortus (strain 2308).